A 301-amino-acid polypeptide reads, in one-letter code: tRNA dimethylallyltransferase 2 (301 aa).

ATP is bound at residue 11-18; the sequence is GATASGKT. Residue 13 to 18 coordinates substrate; the sequence is TASGKT. Residues 36–39 form an interaction with substrate tRNA region; sequence DSRQ.

It belongs to the IPP transferase family. In terms of assembly, monomer. The cofactor is Mg(2+).

The enzyme catalyses adenosine(37) in tRNA + dimethylallyl diphosphate = N(6)-dimethylallyladenosine(37) in tRNA + diphosphate. Catalyzes the transfer of a dimethylallyl group onto the adenine at position 37 in tRNAs that read codons beginning with uridine, leading to the formation of N6-(dimethylallyl)adenosine (i(6)A). This Shewanella sediminis (strain HAW-EB3) protein is tRNA dimethylallyltransferase 2.